Reading from the N-terminus, the 94-residue chain is C-C motif chemokine 17 (94 aa).

An N-terminal signal peptide occupies residues Met1–Ala23. 2 disulfide bridges follow: Cys33–Cys57 and Cys34–Cys73.

This sequence belongs to the intercrine beta (chemokine CC) family.

It localises to the secreted. Functionally, chemokine, which displays chemotactic activity for T lymphocytes, preferentially Th2 cells, but not monocytes or granulocytes. Therefore plays an important role in a wide range of inflammatory and immunological processes. Acts by binding to CCR4 at T-cell surface. Mediates GM-CSF/CSF2-driven pain and inflammation. In the brain, required to maintain the typical, highly branched morphology of hippocampal microglia under homeostatic conditions. May be important for the appropriate adaptation of microglial morphology and synaptic plasticity to acute lipopolysaccharide (LPS)-induced neuroinflammation. Plays a role in wound healing, mainly by inducing fibroblast migration into the wound. The protein is C-C motif chemokine 17 (CCL17) of Macaca mulatta (Rhesus macaque).